A 285-amino-acid polypeptide reads, in one-letter code: Energy-coupling factor transporter ATP-binding protein EcfA2 (285 aa).

One can recognise an ABC transporter domain in the interval leucine 6–arginine 242. Glycine 39–serine 46 lines the ATP pocket.

This sequence belongs to the ABC transporter superfamily. Energy-coupling factor EcfA family. In terms of assembly, forms a stable energy-coupling factor (ECF) transporter complex composed of 2 membrane-embedded substrate-binding proteins (S component), 2 ATP-binding proteins (A component) and 2 transmembrane proteins (T component).

Its subcellular location is the cell membrane. Its function is as follows. ATP-binding (A) component of a common energy-coupling factor (ECF) ABC-transporter complex. Unlike classic ABC transporters this ECF transporter provides the energy necessary to transport a number of different substrates. The sequence is that of Energy-coupling factor transporter ATP-binding protein EcfA2 from Clostridium perfringens (strain SM101 / Type A).